A 622-amino-acid polypeptide reads, in one-letter code: 1-deoxy-D-xylulose-5-phosphate synthase (622 aa).

Thiamine diphosphate-binding positions include H80 and 121-123; that span reads GHS. Residue D152 participates in Mg(2+) binding. Thiamine diphosphate is bound by residues 153-154, N181, Y288, and E370; that span reads GA. N181 contributes to the Mg(2+) binding site.

It belongs to the transketolase family. DXPS subfamily. As to quaternary structure, homodimer. Requires Mg(2+) as cofactor. It depends on thiamine diphosphate as a cofactor.

The enzyme catalyses D-glyceraldehyde 3-phosphate + pyruvate + H(+) = 1-deoxy-D-xylulose 5-phosphate + CO2. Its pathway is metabolic intermediate biosynthesis; 1-deoxy-D-xylulose 5-phosphate biosynthesis; 1-deoxy-D-xylulose 5-phosphate from D-glyceraldehyde 3-phosphate and pyruvate: step 1/1. Its function is as follows. Catalyzes the acyloin condensation reaction between C atoms 2 and 3 of pyruvate and glyceraldehyde 3-phosphate to yield 1-deoxy-D-xylulose-5-phosphate (DXP). The sequence is that of 1-deoxy-D-xylulose-5-phosphate synthase from Shewanella baltica (strain OS185).